Reading from the N-terminus, the 162-residue chain is MPSFDVVSEVDLMEVENAFNQARKEIAQRFDFKGTHTELERDKEQNVLIRAGSEGRAEAALQVLMEKLAKRGVALESLDPQKLEPASGGHVRQLVKLKRGLKIEDARKIVAKVKESGIKVQAAIQGDAVRVTGKKRDDLQAAIHAIRAAAFPIPLQFQNFRD.

It belongs to the YajQ family.

Functionally, nucleotide-binding protein. The polypeptide is Nucleotide-binding protein AnaeK_0101 (Anaeromyxobacter sp. (strain K)).